The primary structure comprises 631 residues: Mitochondrial Rho GTPase (631 aa).

Over 1-605 (MRAGRVRPLR…TQADLKSSTF (605 aa)) the chain is Cytoplasmic. The 167-residue stretch at 15–181 (KKDVRILLVG…FYYAQKAVLH (167 aa)) folds into the Miro 1 domain. Positions 27, 29, 30, 31, and 32 each coordinate GTP. Mg(2+) is bound at residue threonine 31. Aspartate 70 provides a ligand contact to Mg(2+). Serine 72 contributes to the GTP binding site. Lysine 105 is subject to N6-acetyllysine. Residues asparagine 131, lysine 132, aspartate 134, alanine 162, and lysine 163 each coordinate GTP. Lysine 166 is covalently cross-linked (Glycyl lysine isopeptide (Lys-Gly) (interchain with G-Cter in ubiquitin)). The region spanning 197–232 (ACIKALTRIFKISDQDNDGTLNDAELNFFQRICFNT) is the EF-hand 1 domain. Ca(2+)-binding residues include aspartate 210, aspartate 212, aspartate 214, threonine 216, and glutamate 221. A Glycyl lysine isopeptide (Lys-Gly) (interchain with G-Cter in ubiquitin) cross-link involves residue lysine 248. Residues 317-352 (HAYLFLQSTFDKHDLDRDCALSPDELKDLFQVFPYI) form the EF-hand 2 domain. Ca(2+)-binding residues include aspartate 330, aspartate 332, aspartate 334, alanine 336, and glutamate 341. Positions 429-592 (RNVFRCNVIG…FVKLTTMAMY (164 aa)) constitute a Miro 2 domain. GTP is bound by residues glycine 441, cysteine 442, glycine 443, lysine 444, threonine 445, glycine 446, lysine 460, lysine 541, aspartate 543, threonine 571, and cysteine 572. Glycine 441 is a binding site for Mg(2+). Lysine 585 is covalently cross-linked (Glycyl lysine isopeptide (Lys-Gly) (interchain with G-Cter in ubiquitin)). The helical; Anchor for type IV membrane protein transmembrane segment at 606–628 (WLRASFGATVFAVVGFAMYRALL) threads the bilayer. Residues 629 to 631 (KQR) are Mitochondrial intermembrane-facing.

It belongs to the mitochondrial Rho GTPase family. In terms of assembly, homodimer. Interacts with the kinesin-binding proteins TRAK1/OIP106 and TRAK2/GRIF1, forming a link between mitochondria and the trafficking apparatus of the microtubules. Interacts with RAP1GDS1. Interacts with ARMCX1. Found in a complex with KIF5B, OGT, RHOT2 and TRAK1. Ubiquitinated by PRKN during mitophagy, leading to its degradation and enhancement of mitophagy. Deubiquitinated by USP30. In terms of processing, acetylation on Lys-105 decreases sensitivity of mitochondrial transport to elevated Ca(2+) levels, increases mitochondrial transport and promotes axon growth. Deacetylated by HDAC6 which blocks mitochondrial transport and mediates axon growth inhibition.

The protein localises to the mitochondrion outer membrane. It carries out the reaction GTP + H2O = GDP + phosphate + H(+). The enzyme catalyses ATP + H2O = ADP + phosphate + H(+). The catalysed reaction is UTP + H2O = UDP + phosphate + H(+). Its function is as follows. Atypical mitochondrial nucleoside-triphosphatase (NTPase) involved in mitochondrial trafficking. Probably involved in control of anterograde transport of mitochondria and their subcellular distribution. Promotes mitochondrial fission during high calcium conditions. Can hydrolyze GTP, ATP and UTP. This is Mitochondrial Rho GTPase from Rattus norvegicus (Rat).